Reading from the N-terminus, the 244-residue chain is Isoprenyl transferase (244 aa).

Asp23 is an active-site residue. Asp23 contributes to the Mg(2+) binding site. Residues 24–27, Trp28, Arg36, His40, and 68–70 each bind substrate; these read GNGR and STE. Catalysis depends on Asn71, which acts as the Proton acceptor. Substrate contacts are provided by residues Trp72, Arg74, Arg191, and 197 to 199; that span reads RMS. Mg(2+) is bound at residue Glu210.

It belongs to the UPP synthase family. Homodimer. Mg(2+) is required as a cofactor.

Functionally, catalyzes the condensation of isopentenyl diphosphate (IPP) with allylic pyrophosphates generating different type of terpenoids. In Lactococcus lactis subsp. lactis (strain IL1403) (Streptococcus lactis), this protein is Isoprenyl transferase.